The chain runs to 102 residues: Aspartyl/glutamyl-tRNA(Asn/Gln) amidotransferase subunit C (102 aa).

It belongs to the GatC family. In terms of assembly, heterotrimer of A, B and C subunits.

The enzyme catalyses L-glutamyl-tRNA(Gln) + L-glutamine + ATP + H2O = L-glutaminyl-tRNA(Gln) + L-glutamate + ADP + phosphate + H(+). It catalyses the reaction L-aspartyl-tRNA(Asn) + L-glutamine + ATP + H2O = L-asparaginyl-tRNA(Asn) + L-glutamate + ADP + phosphate + 2 H(+). Its function is as follows. Allows the formation of correctly charged Asn-tRNA(Asn) or Gln-tRNA(Gln) through the transamidation of misacylated Asp-tRNA(Asn) or Glu-tRNA(Gln) in organisms which lack either or both of asparaginyl-tRNA or glutaminyl-tRNA synthetases. The reaction takes place in the presence of glutamine and ATP through an activated phospho-Asp-tRNA(Asn) or phospho-Glu-tRNA(Gln). This Bordetella bronchiseptica (strain ATCC BAA-588 / NCTC 13252 / RB50) (Alcaligenes bronchisepticus) protein is Aspartyl/glutamyl-tRNA(Asn/Gln) amidotransferase subunit C.